The chain runs to 129 residues: Large ribosomal subunit protein bL17 (129 aa).

This sequence belongs to the bacterial ribosomal protein bL17 family. Part of the 50S ribosomal subunit. Contacts protein L32.

This is Large ribosomal subunit protein bL17 from Yersinia enterocolitica serotype O:8 / biotype 1B (strain NCTC 13174 / 8081).